The chain runs to 71 residues: Small ribosomal subunit protein bS21 (71 aa).

The disordered stretch occupies residues 43–71 (TERKRAKASAVKRHAKKLARENARRTRLY). The segment covering 46–59 (KRAKASAVKRHAKK) has biased composition (basic residues). Residues 60-71 (LARENARRTRLY) show a composition bias toward basic and acidic residues.

This sequence belongs to the bacterial ribosomal protein bS21 family.

The protein is Small ribosomal subunit protein bS21 of Pectobacterium atrosepticum (strain SCRI 1043 / ATCC BAA-672) (Erwinia carotovora subsp. atroseptica).